Here is a 114-residue protein sequence, read N- to C-terminus: Lymphotactin (114 aa).

An N-terminal signal peptide occupies residues 1–21; sequence MRLLILALLGICSLTAYIVEG. The cysteines at positions 32 and 69 are disulfide-linked. The interval 91 to 114 is disordered; it reads RNNMIQTKPTGTQQSTNTAVTLTG.

This sequence belongs to the intercrine gamma family. As to expression, highest level in spleen, lower in peripheral leukocytes and very low levels in lung, colon and small intestine.

The protein localises to the secreted. Chemotactic activity for lymphocytes but not for monocytes or neutrophils. In thymus, mediates medullary accumulation of thymic dendritic cells and contributes to regulatoy T cell development, playing a role in self-tolerance establishment. This is Lymphotactin (XCL1) from Homo sapiens (Human).